A 335-amino-acid polypeptide reads, in one-letter code: Cytoplasmic envelopment protein 2 (335 aa).

Belongs to the herpesviridae cytoplasmic envelopment protein 2 family. Interacts with cytoplasmic envelopment protein 3 and with the capsid.

It is found in the virion tegument. The protein resides in the host cytoplasm. It localises to the host nucleus. Functionally, plays a critical role in cytoplasmic virus egress. Participates in the final step of tegumentation and envelope acquisition within the host cytoplasm by directly interacting with the capsid. Upon virion binding to target cell, a signaling cascade is triggered to disrupt the interaction with the capsid, thereby preparing capsid uncoating. This Human herpesvirus 6A (strain Uganda-1102) (HHV-6 variant A) protein is Cytoplasmic envelopment protein 2 (U65).